Reading from the N-terminus, the 3010-residue chain is Genome polyprotein (3010 aa).

S2 carries the N-acetylserine; by host modification. Positions 2-23 (STNPKPQRKTKRNTNRRPQDVK) are interaction with STAT1. The segment at 2 to 58 (STNPKPQRKTKRNTNRRPQDVKFPGGGQIVGGVYLLPRRGPRLGVRATRKASERSQP) is interaction with EIF2AK2/PKR. Positions 2–59 (STNPKPQRKTKRNTNRRPQDVKFPGGGQIVGGVYLLPRRGPRLGVRATRKASERSQPR) are interaction with DDX3X. The disordered stretch occupies residues 2–75 (STNPKPQRKT…PKARRPEGRA (74 aa)). At 2–168 (STNPKPQRKT…EDGVNYATGN (167 aa)) the chain is on the cytoplasmic side. 2 consecutive short sequence motifs (nuclear localization signal) follow at residues 5-13 (PKPQRKTKR) and 38-43 (PRRGPR). Positions 7-16 (PQRKTKRNTN) are enriched in basic residues. Residues 32–47 (GGVYLLPRRGPRLGVR) are compositionally biased toward low complexity. Phosphoserine; by host is present on S53. 2 short sequence motifs (nuclear localization signal) span residues 58–64 (PRGRRQP) and 66–71 (PKARRP). A compositionally biased stretch (basic residues) spans 58 to 68 (PRGRRQPIPKA). A Phosphoserine; by host modification is found at S99. An important for endoplasmic reticulum and mitochondrial localization region spans residues 112 to 152 (PRRRSRNLGKVIDTLTCGFADLMGYIPLVGAPLGGAARALA). S116 bears the Phosphoserine; by host PKA mark. The interaction with APOA2 stretch occupies residues 122-173 (VIDTLTCGFADLMGYIPLVGAPLGGAARALAHGVRVLEDGVNYATGNLPGCS). Residues 164–167 (YATG) form an important for lipid droplets localization region. A helical membrane pass occupies residues 169-189 (LPGCSFSIFLLALLSCLTIPA). Residues 178–191 (LLALLSCLTIPASA) constitute a propeptide, ER anchor for the core protein, removed in mature form by host signal peptidase. Residues 190–358 (SAYEVRNVSG…AGAHWGVLAG (169 aa)) are Lumenal-facing. N196, N209, N234, and N250 each carry an N-linked (GlcNAc...) asparagine; by host glycan. The segment at 265-296 (LVGTAAFCSAMYVGDLCGSIFLVSQLFTFSPR) is important for fusion. N-linked (GlcNAc...) asparagine; by host glycosylation is present at N305. A helical membrane pass occupies residues 359-379 (LAYYSMVGNWAKVLIVALLFA). Residues 380–725 (GVDGETHTTG…WEYILLLFLL (346 aa)) lie on the Lumenal side of the membrane. Residues 385-411 (THTTGRVAGHTTSGFTSLFSSGASQKI) are HVR1. 4 N-linked (GlcNAc...) (high mannose) asparagine; by host glycosylation sites follow: N417, N423, N430, and N448. 4 cysteine pairs are disulfide-bonded: C429–C552, C452–C459, C486–C494, and C503–C508. Positions 474-479 (YTKPNS) are HVR2. N-linked (GlcNAc...) asparagine; by host glycosylation is present at N478. Residues 480–493 (SDQRPYCWHYAPRP) form a CD81-binding 1 region. N532 is a glycosylation site (N-linked (GlcNAc...) (high mannose) asparagine; by host). N540 is a glycosylation site (N-linked (GlcNAc...) asparagine; by host). Residues 544 to 551 (PPQGNWFG) are CD81-binding 2. N556 is a glycosylation site (N-linked (GlcNAc...) (high mannose) asparagine; by host). C564 and C569 are disulfide-bonded. An N-linked (GlcNAc...) (high mannose) asparagine; by host glycan is attached at N576. 3 disulfides stabilise this stretch: C581–C585, C597–C620, and C607–C644. 2 N-linked (GlcNAc...) (high mannose) asparagine; by host glycosylation sites follow: N623 and N645. A disulfide bridge links C652 with C677. Residues 660–671 (SELSPLLLSTTE) are PKR/eIF2-alpha phosphorylation homology domain (PePHD). The helical transmembrane segment at 726-746 (LADARVCACLWMMLLIAQAEA) threads the bilayer. Over 747–757 (ALENLVVLNAA) the chain is Lumenal. The chain crosses the membrane as a helical span at residues 758–778 (SVAGAHGILSFLVFFCAAWYI). Residues 779–781 (KGR) lie on the Cytoplasmic side of the membrane. Residues 782–803 (LAPGAAYAFYGVWPLLLLLLAL) form a helical membrane-spanning segment. The Lumenal segment spans residues 804–813 (PPRAYALDRE). A helical transmembrane segment spans residues 814–834 (MAASCGGAVLVGLVFLTLSPY). The Cytoplasmic portion of the chain corresponds to 835–838 (YKVF). A helical transmembrane segment spans residues 839-859 (LTRLIWWLQYFITRAEAHMQV). The Lumenal portion of the chain corresponds to 860 to 881 (WVPPLNVRGGRDAIILLTCAVH). A helical membrane pass occupies residues 882 to 902 (PELIFDITKLLLAILGPLMVL). Residues 903–1026 (QAGITRVPYF…SLEGQGWRLL (124 aa)) form the Peptidase C18 domain. Over 903–1657 (QAGITRVPYF…CMSADLEVVT (755 aa)) the chain is Cytoplasmic. A protease NS2-3 region spans residues 904–1206 (AGITRVPYFV…PVESMETTMR (303 aa)). C922 carries the S-palmitoyl cysteine; by host lipid modification. Residues 929–949 (AGGHYVQMAFMKLGALTGTYV) are interaction with host SCPS1. Catalysis depends on for protease NS2 activity; shared with dimeric partner residues H952, E972, and C993. The 182-residue stretch at 1027 to 1208 (APITAYSQQT…ESMETTMRSP (182 aa)) folds into the Peptidase S29 domain. Catalysis depends on charge relay system; for serine protease NS3 activity residues H1083 and D1107. Residues C1123 and C1125 each coordinate Zn(2+). S1165 (charge relay system; for serine protease NS3 activity) is an active-site residue. C1171 and H1175 together coordinate Zn(2+). The 153-residue stretch at 1217 to 1369 (PAVPQTFQVA…PNIEEIGLSN (153 aa)) folds into the Helicase ATP-binding domain. 1230–1237 (APTGSGKS) contacts ATP. Residues S1237 and E1317 each coordinate Mg(2+). The DECH box motif lies at 1316-1319 (DECH). An RNA-binding region spans residues 1486–1497 (QRRGRTGRGRSG). A helical transmembrane segment spans residues 1658 to 1678 (STWVLVGGVLAALAAYCLTTG). The tract at residues 1679 to 1690 (SVVIVGRIILSG) is NS3-binding. Topologically, residues 1679-1805 (SVVIVGRIIL…SITSPLTTQN (127 aa)) are cytoplasmic. Residues 1806 to 1824 (TLLFNILGGWVAAQLAPPS) traverse the membrane as a helical segment. Residues 1825 to 1828 (AASA) lie on the Lumenal side of the membrane. The helical transmembrane segment at 1829-1849 (FVGAGIAGAAVGSIGLGKVLV) threads the bilayer. A topological domain (cytoplasmic) is located at residue D1850. The chain crosses the membrane as a helical span at residues 1851-1871 (ILAGYGAGVAGALVAFKVMSG). Residues 1872–1881 (EVPSTEDLVN) lie on the Lumenal side of the membrane. The chain crosses the membrane as a helical span at residues 1882 to 1902 (LLPAILSPGALVVGVVCAAIL). Residues 1903 to 1972 (RRHVGPGEGA…WINEDCSTPC (70 aa)) lie on the Cytoplasmic side of the membrane. S-palmitoyl cysteine; by host attachment occurs at residues C1968 and C1972. Residues 1973–2002 (SGSWLRDVWDWICTVLTDFKTWLQSKLLPR) lie within the membrane without spanning it. Residues 2003-2989 (LPGVPFLSCQ…YHSLSRARPR (987 aa)) are Cytoplasmic-facing. Residues C2011, C2029, C2031, and C2052 each coordinate Zn(2+). The interval 2120 to 2208 (EFFTEVDGVR…ASSSASQLSA (89 aa)) is FKBP8-binding. The segment at 2120 to 2332 (EFFTEVDGVR…PIPPPRRKRT (213 aa)) is transcriptional activation. Residues 2135 to 2139 (PACKP) form an interaction with non-structural protein 4A region. The tract at residues 2187 to 2219 (KRRLARGSPPSLASSSASQLSAPSLKATCTTHH) is disordered. The tract at residues 2189 to 2441 (RLARGSPPSL…PCAAEESKLP (253 aa)) is interaction with host SKP2. S2194 carries the phosphoserine; by host; in p56 modification. The span at 2194–2211 (SPPSLASSSASQLSAPSL) shows a compositional bias: low complexity. Residues S2197, S2201, S2204, S2207, and S2210 each carry the phosphoserine; by host; in p58 modification. The segment at 2210–2249 (SLKATCTTHHDSPDADLIEANLLWRQEMGGNITRVESENK) is ISDR. The interaction with EIF2AK2/PKR stretch occupies residues 2210–2275 (SLKATCTTHH…REISVAAEIL (66 aa)). The NS4B-binding stretch occupies residues 2249 to 2306 (KVVILDSFEPLHAEGDEREISVAAEILRKSRKFPSALPIWARPDYNPPLLESWKDPDY). The SH3-binding motif lies at 2322–2325 (PPIP). The Nuclear localization signal motif lies at 2326–2334 (PPRRKRTVV). K2350 participates in a covalent cross-link: Glycyl lysine isopeptide (Lys-Gly) (interchain with G-Cter in ubiquitin). Positions 2351 to 2365 (TFGSSGSSAVDSGTA) are enriched in polar residues. The disordered stretch occupies residues 2351–2407 (TFGSSGSSAVDSGTATALPDLASDDGDKGSDVESYSSMPPLEGEPGDPDLSDGSWST). The V3 stretch occupies residues 2354–2377 (SSGSSAVDSGTATALPDLASDDGD). Phosphoserine; by host occurs at positions 2448 and 2461. A RdRp catalytic domain is found at 2633–2751 (PMGFSYDTRC…ICESAGTQED (119 aa)). Mg(2+) is bound by residues D2639, D2737, and D2738. The helical transmembrane segment at 2990–3010 (WFPLCLLLLSVGVGIYLLPNR) threads the bilayer.

This sequence belongs to the hepacivirus polyprotein family. In terms of assembly, homooligomer. Interacts with E1 (via C-terminus). Interacts with the non-structural protein 5A. Interacts (via N-terminus) with host STAT1 (via SH2 domain); this interaction results in decreased STAT1 phosphorylation and ubiquitin-mediated proteasome-dependent STAT1 degradation, leading to decreased IFN-stimulated gene transcription. Interacts with host STAT3; this interaction constitutively activates STAT3. Interacts with host LTBR receptor. Interacts with host TNFRSF1A receptor and possibly induces apoptosis. Interacts with host HNRPK. Interacts with host YWHAE. Interacts with host UBE3A/E6AP. Interacts with host DDX3X. Interacts with host APOA2. Interacts with host RXRA protein. Interacts with host SP110 isoform 3/Sp110b; this interaction sequesters the transcriptional corepressor SP110 away from the nucleus. Interacts with host CREB3 nuclear transcription protein; this interaction triggers cell transformation. Interacts with host ACY3. Interacts with host C1QR1. Interacts with host RBM24; this interaction, which enhances the interaction of the mature core protein with 5'-UTR, may inhibit viral translation and favor replication. Interacts with host EIF2AK2/PKR; this interaction induces the autophosphorylation of EIF2AK2. Part of the viral assembly initiation complex composed of NS2, E1, E2, NS3, NS4A, NS5A and the mature core protein. As to quaternary structure, forms a heterodimer with envelope glycoprotein E2. Interacts with mature core protein. Interacts with protease NS2. The heterodimer E1/E2 interacts with host CLDN1; this interaction plays a role in viral entry into host cell. Interacts with host SPSB2 (via C-terminus). Part of the viral assembly initiation complex composed of NS2, E1, E2, NS3, NS4A, NS5A and the mature core protein. Interacts with host NEURL3; this interaction prevents E1 binding to glycoprotein E2. Forms a heterodimer with envelope glycoprotein E1. Interacts with host CD81 and SCARB1 receptors; these interactions play a role in viral entry into host cell. Interacts with host EIF2AK2/PKR; this interaction inhibits EIF2AK2 and probably allows the virus to evade the innate immune response. Interacts with host CD209/DC-SIGN and CLEC4M/DC-SIGNR. Interact with host SPCS1; this interaction is essential for viral particle assembly. Interacts with protease NS2. The heterodimer E1/E2 interacts with host CLDN1; this interaction plays a role in viral entry into host cell. Part of the viral assembly initiation complex composed of NS2, E1, E2, NS3, NS4A, NS5A and the mature core protein. Interacts with host SLC3A2/4F2hc; the interaction may facilitate viral entry into host cell. Interacts with human PLSCR1. In terms of assembly, homohexamer. Homoheptamer. Interacts with protease NS2. As to quaternary structure, homodimer. Interacts with host SPCS1; this interaction is essential for viral particle assembly. Interacts with envelope glycoprotein E1. Interacts with envelope glycoprotein E2. Interacts with viroporin p7. Interacts with serine protease/helicase NS3. Part of the replication complex composed of NS2, NS3, NS4A, NS4B, NS5A and the RNA-directed RNA polymerase embedded in an ER-derived membranous web. Part of the viral assembly initiation complex composed of NS2, E1, E2, NS3, NS4A, NS5A and the mature core protein. Interacts with protease NS2. Interacts with non-structural protein 4A; this interaction stabilizes the folding of NS3 serine protease. NS3-NS4A interaction is essential for NS3 activation and allows membrane anchorage of the latter. NS3/NS4A complex also prevents phosphorylation of host IRF3, thus preventing the establishment of dsRNA induced antiviral state. Interacts with host MAVS; this interaction leads to the cleavage and inhibition of host MAVS. Interacts with host TICAM1; this interaction leads to the cleavage and inhibition of host TICAM1. Interacts with host TANK-binding kinase/TBK1; this interaction results in the inhibition of the association between TBK1 and IRF3, which leads to the inhibition of IRF3 activation. Interacts with host RBM24. Part of the replication complex composed of NS2, NS3, NS4A, NS4B, NS5A and the RNA-directed RNA polymerase embedded in an ER-derived membranous web. Part of the viral assembly initiation complex composed of NS2, E1, E2, NS3, NS4A, NS5A and the mature core protein. In terms of assembly, interacts with NS3 serine protease; this interaction stabilizes the folding of NS3 serine protease. NS3-NS4A interaction is essential for NS3 activation and allows membrane anchorage of the latter. Interacts with non-structural protein 5A (via N-terminus). Part of the replication complex composed of NS2, NS3, NS4A, NS4B, NS5A and the RNA-directed RNA polymerase embedded in an ER-derived membranous web. Part of the viral assembly initiation complex composed of NS2, E1, E2, NS3, NS4A, NS5A and the mature core protein. As to quaternary structure, homomultimer. Interacts with non-structural protein NS5A. Interacts with host PLA2G4C; this interaction likely initiates the recruitment of replication complexes to lipid droplets. Interacts with host STING; this interaction disrupts the interaction between STING and TBK1 thereby suppressing the interferon signaling. Part of the replication complex composed of NS2, NS3, NS4A, NS4B, NS5A and the RNA-directed RNA polymerase embedded in an ER-derived membranous web. Monomer. Homodimer; dimerization is required for RNA-binding. Interacts with the mature core protein. Interacts (via N-terminus) with non-structural protein 4A. Interacts with non-structural protein 4B. Interacts (via region D2) with RNA-directed RNA polymerase. Part of the viral assembly initiation complex composed of NS2, E1, E2, NS3, NS4A, NS5A and the mature core protein. Part of the replication complex composed of NS2, NS3, NS4A, NS4B, NS5A and the RNA-directed RNA polymerase embedded in an ER-derived membranous web. Interacts with host GRB2. Interacts with host BIN1. Interacts with host PIK3R1. Interacts with host SRCAP. Interacts with host FKBP8. Interacts (via C-terminus) with host VAPB (via MSP domain). Interacts with host EIF2AK2/PKR; this interaction leads to disruption of EIF2AK2 dimerization by NS5A and probably allows the virus to evade the innate immune response. Interacts (via N-terminus) with host PACSIN2 (via N-terminus); this interaction attenuates protein kinase C alpha-mediated phosphorylation of PACSIN2 by disrupting the interaction between PACSIN2 and PRKCA. Interacts (via N-terminus) with host SRC kinase (via SH2 domain). Interacts with most Src-family kinases. Interacts with host IFI27 and SKP2; promotes the ubiquitin-mediated proteasomal degradation of NS5A. Interacts with host GPS2. Interacts with host TNFRSF21; this interaction allows the modulation by the virus of JNK, p38 MAPK, STAT3, and Akt signaling pathways in a DR6-dependent manner. Interacts (via N-terminus) with host CIDEB (via N-terminus); this interaction seems to regulate the association of HCV particles with APOE. Interacts with host CHKA/Choline Kinase-alpha; CHKA bridges host PI4KA and NS5A and potentiates NS5A-stimulated PI4KA activity, which then facilitates the targeting of the ternary complex to the ER for viral replication. Interacts with host SPSB2 (via C-terminus); this interaction targets NS5A for ubiquitination and degradation. Interacts with host RAB18; this interaction may promote the association of NS5A and other replicase components with lipid droplets. Interacts (via region D2) with host PPIA/CYPA; the interaction stimulates RNA-binding ability of NS5A and is dependent on the peptidyl-prolyl cis-trans isomerase activity of PPIA/CYPA. Interacts with host TRIM14; this interaction induces the degradation of NS5A. In terms of assembly, homooligomer. Interacts with non-structural protein 5A. Interacts with host VAPB. Interacts with host PRK2/PKN2. Interacts with host HNRNPA1 and SEPT6; these interactions facilitate viral replication. Part of the replication complex composed of NS2, NS3, NS4A, NS4B, NS5A and the RNA-directed RNA polymerase. The cofactor is Zn(2+). Mg(2+) serves as cofactor. In terms of processing, specific enzymatic cleavages in vivo yield mature proteins. The structural proteins, core, E1, E2 and p7 are produced by proteolytic processing by host signal peptidases. The core protein precursor is synthesized as a 23 kDa, which is retained in the ER membrane through the hydrophobic signal peptide. Cleavage by the signal peptidase releases the 21 kDa mature core protein. The cleavage of the core protein precursor occurs between aminoacids 176 and 188 but the exact cleavage site is not known. Some degraded forms of the core protein appear as well during the course of infection. The other proteins (p7, NS2, NS3, NS4A, NS4B, NS5A and NS5B) are cleaved by the viral proteases. Autoprocessing between NS2 and NS3 is mediated by the NS2 cysteine protease catalytic domain and regulated by the NS3 N-terminal domain. Phosphorylated by host PKC and PKA. Post-translationally, ubiquitinated; mediated by UBE3A and leading to core protein subsequent proteasomal degradation. In terms of processing, highly N-glycosylated. Palmitoylation is required for NS2/3 autoprocessing and E2 recruitment to membranes. Post-translationally, palmitoylated. This modification may play a role in its polymerization or in protein-protein interactions. In terms of processing, phosphorylated on serines in a basal form termed p56. p58 is a hyperphosphorylated form of p56. p56 and p58 coexist in the cell in roughly equivalent amounts. Hyperphosphorylation is dependent on the presence of NS4A. Host CSNK1A1/CKI-alpha or RPS6KB1 kinases may be responsible for NS5A phosphorylation. Tyrosine phosphorylation is essential for the interaction with host SRC. Post-translationally, the N-terminus is phosphorylated by host PRK2/PKN2.

The protein localises to the host endoplasmic reticulum membrane. It is found in the host mitochondrion membrane. The protein resides in the virion. Its subcellular location is the host cytoplasm. It localises to the host nucleus. The protein localises to the host lipid droplet. It is found in the virion membrane. The protein resides in the host mitochondrion. Its subcellular location is the host cell membrane. It localises to the host perinuclear region. It carries out the reaction Hydrolysis of four peptide bonds in the viral precursor polyprotein, commonly with Asp or Glu in the P6 position, Cys or Thr in P1 and Ser or Ala in P1'.. The enzyme catalyses a ribonucleoside 5'-triphosphate + H2O = a ribonucleoside 5'-diphosphate + phosphate + H(+). It catalyses the reaction ATP + H2O = ADP + phosphate + H(+). The catalysed reaction is RNA(n) + a ribonucleoside 5'-triphosphate = RNA(n+1) + diphosphate. Inhibited by the antiviral drug hexamethylene amiloride. Inhibited by amantadine. Inhibition by amantadine appears to be genotype-dependent. Also inhibited by long-alkyl-chain iminosugar derivatives. Its activity is regulated as follows. Activity is up-regulated by PRK2/PKN2-mediated phosphorylation. Packages viral RNA to form a viral nucleocapsid, and promotes virion budding. Participates in the viral particle production as a result of its interaction with the non-structural protein 5A. Binds RNA and may function as a RNA chaperone to induce the RNA structural rearrangements taking place during virus replication. Modulates viral translation initiation by interacting with viral IRES and 40S ribosomal subunit. Affects various cell signaling pathways, host immunity and lipid metabolism. Prevents the establishment of cellular antiviral state by blocking the interferon-alpha/beta (IFN-alpha/beta) and IFN-gamma signaling pathways and by blocking the formation of phosphorylated STAT1 and promoting ubiquitin-mediated proteasome-dependent degradation of STAT1. Activates STAT3 leading to cellular transformation. Regulates the activity of cellular genes, including c-myc and c-fos. May repress the promoter of p53, and sequester CREB3 and SP110 isoform 3/Sp110b in the cytoplasm. Represses cell cycle negative regulating factor CDKN1A, thereby interrupting an important check point of normal cell cycle regulation. Targets transcription factors involved in the regulation of inflammatory responses and in the immune response: suppresses TNF-induced NF-kappa-B activation, and activates AP-1. Binds to dendritic cells (DCs) via C1QR1, resulting in down-regulation of T-lymphocytes proliferation. Alters lipid metabolism by interacting with hepatocellular proteins involved in lipid accumulation and storage. Induces up-regulation of FAS promoter activity, and thereby contributes to the increased triglyceride accumulation in hepatocytes (steatosis). Its function is as follows. Forms a heterodimer with envelope glycoprotein E2, which mediates virus attachment to the host cell, virion internalization through clathrin-dependent endocytosis and fusion with host membrane. Fusion with the host cell is most likely mediated by both E1 and E2, through conformational rearrangements of the heterodimer required for fusion rather than a classical class II fusion mechanism. E1/E2 heterodimer binds host apolipoproteins such as APOB and APOE thereby forming a lipo-viro-particle (LVP). APOE associated to the LVP allows the initial virus attachment to cell surface receptors such as the heparan sulfate proteoglycans (HSPGs), syndecan-1 (SDC1), syndecan-1 (SDC2), the low-density lipoprotein receptor (LDLR) and scavenger receptor class B type I (SCARB1). The cholesterol transfer activity of SCARB1 allows E2 exposure and binding of E2 to SCARB1 and the tetraspanin CD81. E1/E2 heterodimer binding on CD81 activates the epithelial growth factor receptor (EGFR) signaling pathway. Diffusion of the complex E1-E2-EGFR-SCARB1-CD81 to the cell lateral membrane allows further interaction with Claudin 1 (CLDN1) and occludin (OCLN) to finally trigger HCV entry. In terms of biological role, forms a heterodimer with envelope glycoprotein E1, which mediates virus attachment to the host cell, virion internalization through clathrin-dependent endocytosis and fusion with host membrane. Fusion with the host cell is most likely mediated by both E1 and E2, through conformational rearrangements of the heterodimer required for fusion rather than a classical class II fusion mechanism. The interaction between envelope glycoprotein E2 and host apolipoprotein E/APOE allows the proper assembly, maturation and infectivity of the viral particles. This interaction is probably promoted via the up-regulation of cellular autophagy by the virus. E1/E2 heterodimer binds host apolipoproteins such as APOB and APOE thereby forming a lipo-viro-particle (LVP). APOE associated to the LVP allows the initial virus attachment to cell surface receptors such as the heparan sulfate proteoglycans (HSPGs), syndecan-1 (SDC1), syndecan-1 (SDC2), the low-density lipoprotein receptor (LDLR) and scavenger receptor class B type I (SCARB1). The cholesterol transfer activity of SCARB1 allows E2 exposure and binding of E2 to SCARB1 and the tetraspanin CD81. E1/E2 heterodimer binding on CD81 activates the epithelial growth factor receptor (EGFR) signaling pathway. Diffusion of the complex E1-E2-EGFR-SCARB1-CD81 to the cell lateral membrane allows further interaction with Claudin 1 (CLDN1) and occludin (OCLN) to finally trigger HCV entry. Inhibits host EIF2AK2/PKR activation, preventing the establishment of an antiviral state. Viral ligand for CD209/DC-SIGN and CLEC4M/DC-SIGNR, which are respectively found on dendritic cells (DCs), and on liver sinusoidal endothelial cells and macrophage-like cells of lymph node sinuses. These interactions allow the capture of circulating HCV particles by these cells and subsequent transmission to permissive cells. Capture of circulating HCV particles by these SIGN+ cells may facilitate virus infection of proximal hepatocytes and lymphocyte subpopulations and may be essential for the establishment of persistent infection. Functionally, ion channel protein that acts as a viroporin and plays an essential role in the assembly, envelopment and secretion of viral particles. Regulates the host cell secretory pathway, which induces the intracellular retention of viral glycoproteins and favors assembly of viral particles. Creates a pore in acidic organelles and releases Ca(2+) and H(+) in the cytoplasm of infected cells, leading to a productive viral infection. High levels of cytoplasmic Ca(2+) may trigger membrane trafficking and transport of viral ER-associated proteins to viroplasms, sites of viral genome replication. This ionic imbalance induces the assembly of the inflammasome complex, which triggers the maturation of pro-IL-1beta into IL-1beta through the action of caspase-1. Targets also host mitochondria and induces mitochondrial depolarization. In addition of its role as a viroporin, acts as a lipid raft adhesion factor. Cysteine protease required for the proteolytic auto-cleavage between the non-structural proteins NS2 and NS3. The N-terminus of NS3 is required for the function of NS2 protease (active region NS2-3). Promotes the initiation of viral particle assembly by mediating the interaction between structural and non-structural proteins. Its function is as follows. Displays three enzymatic activities: serine protease with a chymotrypsin-like fold, NTPase and RNA helicase. NS3 serine protease, in association with NS4A, is responsible for the cleavages of NS3-NS4A, NS4A-NS4B, NS4B-NS5A and NS5A-NS5B. The NS3/NS4A complex prevents phosphorylation of host IRF3, thus preventing the establishment of dsRNA induced antiviral state. The NS3/NS4A complex induces host amino acid transporter component SLC3A2, thus contributing to HCV propagation. NS3 RNA helicase binds to RNA and unwinds both dsDNA and dsRNA in the 3' to 5' direction, and likely resolves RNA complicated stable secondary structures in the template strand. Binds a single ATP and catalyzes the unzipping of a single base pair of dsRNA. Inhibits host antiviral proteins TBK1 and IRF3 thereby preventing the establishment of an antiviral state. Cleaves host MAVS/CARDIF thereby preventing the establishment of an antiviral state. Cleaves host TICAM1/TRIF, thereby disrupting TLR3 signaling and preventing the establishment of an antiviral state. In terms of biological role, induces a specific membrane alteration that serves as a scaffold for the virus replication complex. This membrane alteration gives rise to the so-called ER-derived membranous web that contains the replication complex. NS4B self-interaction contributes to its function in membranous web formation. Promotes host TRIF protein degradation in a CASP8-dependent manner thereby inhibiting host TLR3-mediated interferon signaling. Disrupts the interaction between STING and TBK1 contributing to the inhibition of interferon signaling. Functionally, phosphorylated protein that is indispensable for viral replication and assembly. Both hypo- and hyperphosphorylated states are required for the viral life cycle. The hyperphosphorylated form of NS5A is an inhibitor of viral replication. Involved in RNA-binding and especially in binding to the viral genome. Zinc is essential for RNA-binding. Participates in the viral particle production as a result of its interaction with the mature viral core protein. Its interaction with host VAPB may target the viral replication complex to vesicles. Down-regulates viral IRES translation initiation. Mediates interferon resistance, presumably by interacting with and inhibiting host EIF2AK2/PKR. Prevents BIN1-induced apoptosis. Acts as a transcriptional activator of some host genes important for viral replication when localized in the nucleus. Via the interaction with host PACSIN2, modulates lipid droplet formation in order to promote virion assembly. Modulates TNFRSF21/DR6 signaling pathway for viral propagation. RNA-dependent RNA polymerase that performs primer-template recognition and RNA synthesis during viral replication. Initiates RNA transcription/replication at a flavin adenine dinucleotide (FAD), resulting in a 5'- FAD cap on viral RNAs. In this way, recognition of viral 5' RNA by host pattern recognition receptors can be bypassed, thereby evading activation of antiviral pathways. The sequence is that of Genome polyprotein from Hepatitis C virus genotype 1b (strain HC-J4) (HCV).